A 981-amino-acid chain; its full sequence is Calsyntenin-1 (981 aa).

The signal sequence occupies residues Met-1 to Ala-28. At Ala-29–Thr-859 the chain is on the extracellular side. 2 Cadherin domains span residues Leu-38–Phe-164 and Lys-165–Trp-265. N-linked (GlcNAc...) asparagine glycosylation is found at Asn-346, Asn-366, and Asn-515. Residues Ala-860–Phe-880 form a helical membrane-spanning segment. The Cytoplasmic portion of the chain corresponds to Arg-881–Tyr-981. A disordered region spans residues Met-915–Tyr-981. Positions Glu-925–Gln-960 are enriched in acidic residues. Positions Asp-962–Tyr-981 are enriched in polar residues.

It belongs to the calsyntenin family. Directly interacts with APBA2. Forms a tripartite complex with APBA2 and APP. Interacts with KLC1. In terms of assembly, interacts with APBB1; this interaction stabilizes AlcICD metabolism. As to quaternary structure, interacts with PSEN1. In terms of processing, proteolytically processed under normal cellular conditions. A primary zeta-cleavage generates a large extracellular (soluble) N-terminal domain (sAlc) and a short C-terminal transmembrane fragment (CTF1). A secondary cleavage catalyzed by presenilin gamma-secretase within the transmembrane domain releases the beta-Alc-alpha chain in the extracellular milieu and produces an intracellular fragment (AlcICD). This processing is strongly suppressed in the tripartite complex formed with APBA2 and APP, which seems to prevent the association with PSEN1. Expressed in the brain and, a lower level, in the heart, skeletal muscle, kidney and placenta. Accumulates in dystrophic neurites around the amyloid core of Alzheimer disease senile plaques (at protein level).

It is found in the postsynaptic cell membrane. Its subcellular location is the endoplasmic reticulum membrane. The protein localises to the golgi apparatus membrane. It localises to the cell projection. The protein resides in the neuron projection. It is found in the nucleus. Its function is as follows. Postsynaptic adhesion molecule that binds to presynaptic neurexins to mediate both excitatory and inhibitory synapse formation. Promotes synapse development by acting as a cell adhesion molecule at the postsynaptic membrane, which associates with neurexin-alpha at the presynaptic membrane. Also functions as a cargo in axonal anterograde transport by acting as a molecular adapter that promotes KLC1 association with vesicles. Complex formation with APBA2 and APP, stabilizes APP metabolism and enhances APBA2-mediated suppression of beta-APP40 secretion, due to the retardation of intracellular APP maturation. As intracellular fragment AlcICD, suppresses APBB1-dependent transactivation stimulated by APP C-terminal intracellular fragment (AICD), most probably by competing with AICD for APBB1-binding. In terms of biological role, in complex with APBA2 and C99, a C-terminal APP fragment, abolishes C99 interaction with PSEN1 and thus APP C99 cleavage by gamma-secretase, most probably through stabilization of the direct interaction between APBA2 and APP. The protein is Calsyntenin-1 of Homo sapiens (Human).